The sequence spans 222 residues: Endonuclease V (222 aa).

2 residues coordinate Mg(2+): aspartate 43 and aspartate 109.

This sequence belongs to the endonuclease V family. It depends on Mg(2+) as a cofactor.

It localises to the cytoplasm. The enzyme catalyses Endonucleolytic cleavage at apurinic or apyrimidinic sites to products with a 5'-phosphate.. Functionally, DNA repair enzyme involved in the repair of deaminated bases. Selectively cleaves double-stranded DNA at the second phosphodiester bond 3' to a deoxyinosine leaving behind the intact lesion on the nicked DNA. The protein is Endonuclease V of Roseiflexus sp. (strain RS-1).